Reading from the N-terminus, the 121-residue chain is Large ribosomal subunit protein bL12 (121 aa).

It belongs to the bacterial ribosomal protein bL12 family. Homodimer. Part of the ribosomal stalk of the 50S ribosomal subunit. Forms a multimeric L10(L12)X complex, where L10 forms an elongated spine to which 2 to 4 L12 dimers bind in a sequential fashion. Binds GTP-bound translation factors.

Forms part of the ribosomal stalk which helps the ribosome interact with GTP-bound translation factors. Is thus essential for accurate translation. This Aeromonas hydrophila subsp. hydrophila (strain ATCC 7966 / DSM 30187 / BCRC 13018 / CCUG 14551 / JCM 1027 / KCTC 2358 / NCIMB 9240 / NCTC 8049) protein is Large ribosomal subunit protein bL12.